Reading from the N-terminus, the 101-residue chain is Urease subunit beta (101 aa).

The protein belongs to the urease beta subunit family. Heterotrimer of UreA (gamma), UreB (beta) and UreC (alpha) subunits. Three heterotrimers associate to form the active enzyme.

The protein localises to the cytoplasm. It carries out the reaction urea + 2 H2O + H(+) = hydrogencarbonate + 2 NH4(+). It functions in the pathway nitrogen metabolism; urea degradation; CO(2) and NH(3) from urea (urease route): step 1/1. The protein is Urease subunit beta of Burkholderia pseudomallei (strain 668).